The following is a 278-amino-acid chain: MTLSSALIKIFITFLFLQNHVNSQYSSPSKPQPSLGSTISFSITKFDDESPNIFVKGDTSISNGVLSLTKTDKYSGKPLQKSVGHATHLTPIHIWDETSGELADFSTSFSFIVNTNGSSLHGDGFTFFLGPLHFDLPKNSSGGYLGLFNPETALIASQNPIVAIEFDSFTNGWDPASPSQYTHIGIDVGSIDSVSTADWPLNVLPRNALGEARINYNSESKRLSAFVDYPGLGESTGVSFVVDLRSVLPEWVRVGFSAATGELVETHDIINWSFEAAL.

The first 23 residues, 1–23 (MTLSSALIKIFITFLFLQNHVNS), serve as a signal peptide directing secretion. N-linked (GlcNAc...) asparagine glycosylation is found at asparagine 116, asparagine 139, and asparagine 271.

The protein belongs to the leguminous lectin family.

Its function is as follows. May be involved in arbuscular mycorrhizal (AM) symbiosis with AM fungi. The protein is Lectin 6 of Medicago truncatula (Barrel medic).